The following is an 875-amino-acid chain: Metal transporter CNNM2 (875 aa).

Topologically, residues 1 to 250 are extracellular; the sequence is MIGCGACEPE…TKMIVGEEKK (250 aa). A glycan (N-linked (GlcNAc...) asparagine) is linked at asparagine 112. A disordered region spans residues 121-149; it reads TEHERRRHTPSERGLGGPAPPEPDSGPQR. A helical transmembrane segment spans residues 251–271; it reads FLLPFWLQVIFISLLLCLSGM. A CNNM transmembrane domain is found at 251 to 431; the sequence is FLLPFWLQVI…DPYNDLVKEE (181 aa). At 272 to 313 the chain is on the cytoplasmic side; that stretch reads FSGLNLGLMALDPMELRIVQNCGTEKEKNYAKRIEPVRRQGN. An intramembrane region (helical) is located at residues 314 to 334; sequence YLLCSLLLGNVLVNTTLTILL. Over 335–338 the chain is Cytoplasmic; that stretch reads DDIA. Residues 339–359 traverse the membrane as a helical segment; that stretch reads GSGLVAVVVSTIGIVIFGEIV. The Extracellular segment spans residues 360-368; the sequence is PQAICSRHG. The chain crosses the membrane as a helical span at residues 369 to 389; that stretch reads LAVGANTIFLTKFFMMMTFPA. Topologically, residues 390-875 are cytoplasmic; sequence SYPVSKLLDC…NHSLHSEGAI (486 aa). 2 CBS domains span residues 450–511 and 518–584; these read MTPL…CTPL and YNHP…ILDE. The disordered stretch occupies residues 741–763; that stretch reads AGSPGENKSPPRPCGLNHSDSLS. A Phosphoserine modification is found at serine 761.

The protein belongs to the ACDP family. Isoform 1 and isoform 2 may interact with each other. The N-terminus is cleaved within the endoplasmic reticulum. The signal peptidase complex seems to be involved in the processing, but the exact cleavage site has not been identified. As to expression, widely expressed, with highest levels in kidney, lung, spleen and testis. In the kidney, predominantly expressed in the distal convoluted tubule and, at lower levels, in the connecting tubule (at protein level).

It is found in the cell membrane. Divalent metal cation transporter. Mediates transport of divalent metal cations in an order of Mg(2+) &gt; Co(2+) &gt; Mn(2+) &gt; Sr(2+) &gt; Ba(2+) &gt; Cu(2+) &gt; Fe(2+). The polypeptide is Metal transporter CNNM2 (Cnnm2) (Mus musculus (Mouse)).